The chain runs to 226 residues: PKHD-type hydroxylase Plav_0377 (226 aa).

In terms of domain architecture, Fe2OG dioxygenase spans 78–178; the sequence is KVLPPRFNRY…RLASFFWVQS (101 aa). Residues His-96, Asp-98, and His-159 each coordinate Fe cation. Arg-169 lines the 2-oxoglutarate pocket.

Requires Fe(2+) as cofactor. L-ascorbate serves as cofactor.

The chain is PKHD-type hydroxylase Plav_0377 from Parvibaculum lavamentivorans (strain DS-1 / DSM 13023 / NCIMB 13966).